A 101-amino-acid chain; its full sequence is Small ribosomal subunit protein uS14 (101 aa).

Belongs to the universal ribosomal protein uS14 family. As to quaternary structure, part of the 30S ribosomal subunit. Contacts proteins S3 and S10.

Its function is as follows. Binds 16S rRNA, required for the assembly of 30S particles and may also be responsible for determining the conformation of the 16S rRNA at the A site. The chain is Small ribosomal subunit protein uS14 from Pseudomonas putida (strain GB-1).